The following is an 820-amino-acid chain: Trimethylamine-N-oxide reductase (820 aa).

Positions 1–33 (MAITRRSFLKGVATTSAASVIGPSLLASASANA) form a signal peptide, tat-type signal. S179 contributes to the Mo-bis(molybdopterin guanine dinucleotide) binding site.

It belongs to the prokaryotic molybdopterin-containing oxidoreductase family. It depends on Mo-bis(molybdopterin guanine dinucleotide) as a cofactor. Post-translationally, predicted to be exported by the Tat system. The position of the signal peptide cleavage has not been experimentally proven.

It localises to the periplasm. It catalyses the reaction trimethylamine + 2 Fe(III)-[cytochrome c] + H2O = trimethylamine N-oxide + 2 Fe(II)-[cytochrome c] + 3 H(+). Its function is as follows. Reduces trimethylamine-N-oxide (TMAO) into trimethylamine; an anaerobic reaction coupled to energy-yielding reactions. The polypeptide is Trimethylamine-N-oxide reductase (torA) (Vibrio parahaemolyticus serotype O3:K6 (strain RIMD 2210633)).